The chain runs to 539 residues: Phosphoenolpyruvate carboxykinase (ATP) (539 aa).

Substrate-binding residues include R59, Y200, and K206. Residues K206, H225, and 242 to 250 each bind ATP; that span reads GLSGTGKTT. Mn(2+) contacts are provided by K206 and H225. Residue D263 participates in Mn(2+) binding. Residues E291, R327, 447–448, and T453 each bind ATP; that span reads RI. Substrate is bound at residue R327.

The protein belongs to the phosphoenolpyruvate carboxykinase (ATP) family. It depends on Mn(2+) as a cofactor.

The protein resides in the cytoplasm. It catalyses the reaction oxaloacetate + ATP = phosphoenolpyruvate + ADP + CO2. Its pathway is carbohydrate biosynthesis; gluconeogenesis. Functionally, involved in the gluconeogenesis. Catalyzes the conversion of oxaloacetate (OAA) to phosphoenolpyruvate (PEP) through direct phosphoryl transfer between the nucleoside triphosphate and OAA. This is Phosphoenolpyruvate carboxykinase (ATP) from Selenomonas ruminantium.